Here is a 288-residue protein sequence, read N- to C-terminus: Ice-binding protein (288 aa).

A signal peptide spans 1-22 (MFSTTLINTFSLGLLAVVSVVA). 2 short sequence motifs (ice-binding site motif (T-A/G-X-T/N)) span residues 75–78 (TAGN) and 154–157 (TAFN). Asn194 carries N-linked (GlcNAc...) asparagine glycosylation. 2 consecutive short sequence motifs (ice-binding site motif (T-A/G-X-T/N)) follow at residues 196–199 (TGVT) and 265–268 (TGAT).

The protein belongs to the ice-binding protein family.

It localises to the secreted. In terms of biological role, binds ice crystals and most probably inhibits their growth in order to prevent cell damage from extracellular ice. The sequence is that of Ice-binding protein from Lentinula edodes (Shiitake mushroom).